Reading from the N-terminus, the 551-residue chain is Glucan 1,4-alpha-maltotetraohydrolase (551 aa).

The first 21 residues, M1 to A21, serve as a signal peptide directing secretion. Ca(2+) is bound by residues D22, Q23, H34, D37, and E38. Y99 to F100 provides a ligand contact to substrate. N137 is a binding site for Ca(2+). Residue H138 coordinates substrate. C161 and C171 are joined by a disulfide. Ca(2+) contacts are provided by D172 and D175. Substrate is bound at residue F177–E181. A Ca(2+)-binding site is contributed by D183. R212 is a binding site for substrate. The Nucleophile role is filled by D214. Residue G218 coordinates Ca(2+). C237 and C272 are disulfide-bonded. E240 serves as the catalytic Proton donor. Substrate contacts are provided by H314 and Q326. The CBM20 domain maps to G449–F551.

The protein belongs to the glycosyl hydrolase 13 family. Monomer. Ca(2+) serves as cofactor.

It localises to the secreted. It catalyses the reaction Hydrolysis of (1-&gt;4)-alpha-D-glucosidic linkages in amylaceous polysaccharides, to remove successive maltotetraose residues from the non-reducing chain ends.. The protein operates within glycan degradation; starch degradation. The chain is Glucan 1,4-alpha-maltotetraohydrolase (mta) from Roseateles saccharophilus (Pseudomonas saccharophila).